The chain runs to 1477 residues: Ring canal kelch protein (1477 aa).

Disordered stretches follow at residues 19 to 62, 76 to 96, and 108 to 137; these read LSNG…PGLG, LLQQQQQQHHHHQNPAAEGSG, and SQNSLDESSQKHVQRPNGKERGTVGQYSNE. The segment covering 20-46 has biased composition (low complexity); sequence SNGNSNNNNQQQQQQQQGQNPQQPAQN. 2 positions are modified to phosphoserine: Ser108 and Ser111. Positions 157–223 constitute a BTB domain; that stretch reads CDVILVADDV…VYTATVEVNE (67 aa). 6 Kelch repeats span residues 404–449, 450–496, 498–543, 545–592, 594–639, and 641–687; these read ILLV…VLGD, KVYA…VLNG, IYAV…VVHG, LYAV…VLNN, LYAV…AHDG, and LYVV…MIDK. Position 690 (Sec690) is a non-standard amino acid, selenocysteine. Disordered regions lie at residues 744–841, 1119–1200, 1291–1326, 1359–1416, and 1446–1477; these read PAAP…PQRI, HSAA…GNGT, RDANASARPLHSTLSRLRNGEKRNPNRVAGNYQYED, PLLQ…FKPK, and PVSLSDNETETTSSQNNLPSTTNSNNLNEHND. Low complexity-rich tracts occupy residues 763 to 813 and 820 to 839; these read APIG…ANNN and AAPAPSQQQQQQQAQPQQPQ. Over residues 1125 to 1137 the composition is skewed to polar residues; sequence IPSSSNINANRTT. The segment covering 1166 to 1192 has biased composition (low complexity); the sequence is KTTSTGSGKSVTLAKKTSTAAARSSSS. 2 stretches are compositionally biased toward low complexity: residues 1374–1391 and 1456–1477; these read QQRRLQRQGAQAQQQSQQ and TTSSQNNLPSTTNSNNLNEHND.

As to expression, both proteins are expressed in ovaries, male testis, ovariectomized females, cuticle, salivary gland and imaginal disks. Kelch short protein is the predominant form and is also expressed in fat bodies. On entry into metamorphosis levels of full-length protein increase in testis and imaginal disks.

The protein localises to the cytoplasm. Its subcellular location is the cytoskeleton. Functionally, component of ring canals that regulates the flow of cytoplasm between cells. May be involved in the regulation of cytoplasm flow from nurse cells to the oocyte during oogenesis. Binds actin. The sequence is that of Ring canal kelch protein (kel) from Drosophila melanogaster (Fruit fly).